A 397-amino-acid polypeptide reads, in one-letter code: Small ribosomal subunit protein mS29 (397 aa).

A mitochondrion-targeting transit peptide spans 1–17; the sequence is MLKGMTRLVSRVHKLDP. An N6-acetyllysine mark is found at K174 and K206.

Belongs to the mitochondrion-specific ribosomal protein mS29 family. Component of the mitochondrial ribosome small subunit (28S) which comprises a 12S rRNA and about 30 distinct proteins. Interacts with DELE1. Interacts with NOA1.

The protein resides in the mitochondrion. It catalyses the reaction GTP + H2O = GDP + phosphate + H(+). As a component of the mitochondrial small ribosomal subunit, it plays a role in the translation of mitochondrial mRNAs. Involved in mediating interferon-gamma-induced cell death. Displays GTPase activity in vitro. The protein is Small ribosomal subunit protein mS29 of Bos taurus (Bovine).